The primary structure comprises 430 residues: Glutamate-1-semialdehyde 2,1-aminomutase (430 aa).

Lys-267 carries the post-translational modification N6-(pyridoxal phosphate)lysine.

The protein belongs to the class-III pyridoxal-phosphate-dependent aminotransferase family. HemL subfamily. In terms of assembly, homodimer. It depends on pyridoxal 5'-phosphate as a cofactor.

It is found in the cytoplasm. The enzyme catalyses (S)-4-amino-5-oxopentanoate = 5-aminolevulinate. It participates in porphyrin-containing compound metabolism; protoporphyrin-IX biosynthesis; 5-aminolevulinate from L-glutamyl-tRNA(Glu): step 2/2. This chain is Glutamate-1-semialdehyde 2,1-aminomutase, found in Lawsonia intracellularis (strain PHE/MN1-00).